The following is a 38-amino-acid chain: Augerpeptide hhe53 (38 aa).

Contains 2 disulfide bonds. As to expression, expressed by the venom duct.

The protein localises to the secreted. This chain is Augerpeptide hhe53, found in Hastula hectica (Sea snail).